Consider the following 327-residue polypeptide: Phenylalanine--tRNA ligase alpha subunit (327 aa).

Glutamate 252 is a Mg(2+) binding site.

The protein belongs to the class-II aminoacyl-tRNA synthetase family. Phe-tRNA synthetase alpha subunit type 1 subfamily. As to quaternary structure, tetramer of two alpha and two beta subunits. The cofactor is Mg(2+).

Its subcellular location is the cytoplasm. It catalyses the reaction tRNA(Phe) + L-phenylalanine + ATP = L-phenylalanyl-tRNA(Phe) + AMP + diphosphate + H(+). This chain is Phenylalanine--tRNA ligase alpha subunit, found in Haemophilus ducreyi (strain 35000HP / ATCC 700724).